The primary structure comprises 254 residues: rRNA N-glycosylase sapovaccarin-S2 (254 aa).

This sequence belongs to the ribosome-inactivating protein family. Type 1 RIP subfamily. Expressed in seeds; most abundant in the perisperm.

It carries out the reaction Endohydrolysis of the N-glycosidic bond at one specific adenosine on the 28S rRNA.. In terms of biological role, exhibits N-glycosylase activity. Catalyzes the release of one adenine from a ribosome. Acts as a ribosome-inactivating protein and inhibits protein synthesis. Induces cell death in Huh-7 liver cells. May contribute to the protection against plant pests and predators or play a role in regulating the death of plant cells. The sequence is that of rRNA N-glycosylase sapovaccarin-S2 from Gypsophila vaccaria (Cow soapwort).